The chain runs to 115 residues: uncharacterized protein (115 aa).

Transmembrane regions (helical) follow at residues 23-43 (LVYAALAFVGGFAVWFSLFFA), 63-83 (AMVTMWIGVGAVLLLTLVVMV), and 90-110 (NVVIGWPFVGLLALGLVYVAA).

The protein resides in the cell membrane. This is an uncharacterized protein from Mycobacterium bovis (strain ATCC BAA-935 / AF2122/97).